The sequence spans 161 residues: MSYRSFSFLPNIDQNSVFSNRFNQIDKIFSTLTGEKPLSDTPAYNLFQIDEHKYELILSIPGYEEKELDISVHNSQLTVQGKKQNQENDDKKIKKYLHKGIIFNDFSLNFNFDHKIQVKKAELFSGLLKINFECRVPDEEKPKKIFINIPNKVKEIEKNKI.

The sHSP domain maps to 35–150 (EKPLSDTPAY…KPKKIFINIP (116 aa)).

Belongs to the small heat shock protein (HSP20) family.

This Buchnera aphidicola subsp. Schizaphis graminum (strain Sg) protein is Small heat shock protein ibp (ibp).